A 1073-amino-acid polypeptide reads, in one-letter code: Semaphorin-6D (1073 aa).

An N-terminal signal peptide occupies residues 1–20 (MRVFLLCAYILLLMVSQLRA). At 21–662 (VSFPEDDEPL…GESNQMVHMN (642 aa)) the chain is on the extracellular side. The Sema domain maps to 27–512 (DEPLNTVDYH…FSSCIIRIPL (486 aa)). Residue Asn51 is glycosylated (N-linked (GlcNAc...) asparagine). 4 cysteine pairs are disulfide-bonded: Cys108-Cys118, Cys136-Cys145, Cys259-Cys370, and Cys284-Cys329. A glycan (N-linked (GlcNAc...) asparagine) is linked at Asn283. Residues Asn435 and Asn461 are each glycosylated (N-linked (GlcNAc...) asparagine). Intrachain disulfides connect Cys477/Cys506, Cys515/Cys533, Cys521/Cys568, and Cys525/Cys541. Residues 514–569 (RCERYGSCKKSCIASRDPYCGWLSQGSCGRVTPGMLAEGYEQDTEFGNTAHLGDCH) form the PSI domain. Asn631 carries an N-linked (GlcNAc...) asparagine glycan. Residues 663-683 (VLITCVFAAFVLGAFIAGVAV) traverse the membrane as a helical segment. Residues 684–1073 (YCYRDMFVRK…SVRPLNKYTY (390 aa)) lie on the Cytoplasmic side of the membrane. Phosphoserine is present on residues Ser723, Ser734, and Ser744. Disordered stretches follow at residues 744–775 (SRKELPPNGDTKSMVMDHRGQPPELAALPTPE), 787–825 (AMKSHSEKAHGHGASRKETPQFFPSSPPPHSPLSHGHIP), 839–874 (TSFSNSNAHKAEKKLQNIDHPLTKSSSKRDHRRSVD), 914–1005 (SMSE…PTPT), and 1021–1073 (LQPS…KYTY). The residue at position 773 (Thr773) is a Phosphothreonine. Positions 790–805 (SHSEKAHGHGASRKET) are enriched in basic and acidic residues. 3 positions are modified to phosphoserine: Ser931, Ser957, and Ser983. Residues 931–942 (SPPSTLPRNSPT) show a composition bias toward polar residues. 2 stretches are compositionally biased toward polar residues: residues 980 to 995 (NLNSPNGVLLSRQPSM) and 1021 to 1037 (LQPSLSRQSSYTSNGTL).

It belongs to the semaphorin family.

Its subcellular location is the cell membrane. It localises to the cytoplasm. Its function is as follows. Shows growth cone collapsing activity on dorsal root ganglion (DRG) neurons in vitro. May be a stop signal for the DRG neurons in their target areas, and possibly also for other neurons. May also be involved in the maintenance and remodeling of neuronal connections. Ligand of TREM2 with PLXNA1 as coreceptor in dendritic cells, plays a role in the generation of immune responses and skeletal homeostasis. The chain is Semaphorin-6D from Homo sapiens (Human).